A 63-amino-acid chain; its full sequence is Cysteine-rich peptide clone 2 (63 aa).

The signal sequence occupies residues 1 to 23 (MHFSGVVLILLSMTLVNFVFVET). Cystine bridges form between C33-C53, C38-C58, and C42-C60.

In terms of tissue distribution, expressed by the venom gland.

The protein resides in the secreted. The chain is Cysteine-rich peptide clone 2 from Tityus costatus (Brazilian scorpion).